The sequence spans 161 residues: F-box only protein 48 (161 aa).

Residues 1–25 are disordered; it reads MKKTSKKNNNFKIPGTELNSADAER. An F-box domain is found at 32 to 79; sequence RNFVELLPLEVTYKIFSQLDIQSLCRASRTCTGWNCAIRNNDSLWKPH.

The polypeptide is F-box only protein 48 (Fbxo48) (Mus musculus (Mouse)).